We begin with the raw amino-acid sequence, 246 residues long: UDP-N-acetyl-D-mannosaminuronic acid transferase (246 aa).

This sequence belongs to the glycosyltransferase 26 family.

The catalysed reaction is UDP-N-acetyl-alpha-D-mannosaminouronate + N-acetyl-alpha-D-glucosaminyl-di-trans,octa-cis-undecaprenyl diphosphate = beta-D-ManNAcA-(1-&gt;4)-alpha-D-GlcNAc-di-trans,octa-cis-undecaprenyl diphosphate + UDP + H(+). It participates in bacterial outer membrane biogenesis; enterobacterial common antigen biosynthesis. In terms of biological role, catalyzes the synthesis of Und-PP-GlcNAc-ManNAcA (Lipid II), the second lipid-linked intermediate involved in enterobacterial common antigen (ECA) synthesis. In Klebsiella pneumoniae (strain 342), this protein is UDP-N-acetyl-D-mannosaminuronic acid transferase.